The chain runs to 197 residues: Prefoldin subunit 3 (197 aa).

At Ala-2 the chain carries N-acetylalanine. N6-acetyllysine is present on Lys-59.

It belongs to the prefoldin subunit alpha family. In terms of assembly, heterohexamer of two PFD-alpha type and four PFD-beta type subunits. Binds to the C-terminal part of VHL. In terms of tissue distribution, ubiquitous.

Its subcellular location is the cytoplasm. It localises to the nucleus. In terms of biological role, binds specifically to cytosolic chaperonin (c-CPN) and transfers target proteins to it. Binds to nascent polypeptide chain and promotes folding in an environment in which there are many competing pathways for nonnative proteins. The polypeptide is Prefoldin subunit 3 (VBP1) (Homo sapiens (Human)).